The primary structure comprises 550 residues: Metal transporter Nramp3 (550 aa).

Residues methionine 1–proline 26 show a composition bias toward polar residues. The disordered stretch occupies residues methionine 1–leucine 30. The next 12 membrane-spanning stretches (helical) occupy residues leucine 50–phenylalanine 70, glutamate 83–alanine 103, phenylalanine 127–glycine 147, isoleucine 158–glutamine 178, leucine 185–glycine 205, isoleucine 233–leucine 253, alanine 276–valine 296, leucine 333–glycine 353, tryptophan 368–glycine 390, leucine 397–leucine 417, isoleucine 435–isoleucine 455, and valine 473–leucine 493. A disordered region spans residues glycine 523–aspartate 550. Positions serine 536 to aspartate 550 are enriched in polar residues.

It belongs to the NRAMP (TC 2.A.55) family.

It is found in the membrane. In terms of biological role, probable metal transporter. This Oryza sativa subsp. japonica (Rice) protein is Metal transporter Nramp3 (NRAMP3).